The sequence spans 947 residues: Protocadherin alpha-4 (947 aa).

Positions 1–29 (MEFSWGSGQESQRLLLSFLFLAIWEPGNS) are cleaved as a signal peptide. Cadherin domains lie at 30-133 (QLHY…PPTF), 134-242 (PTTQ…SPVF), 243-350 (DRSL…APEL), 351-455 (EFKS…APAF), 456-565 (AQPE…APTL), and 573-681 (SGGI…APSR). Residues 30–697 (QLHYSIPEEA…NAEASLVDVN (668 aa)) lie on the Extracellular side of the membrane. Cysteine 96 and cysteine 102 are oxidised to a cystine. N-linked (GlcNAc...) asparagine glycosylation is found at asparagine 257 and asparagine 265. Asparagine 548 is a glycosylation site (N-linked (GlcNAc...) asparagine). The chain crosses the membrane as a helical span at residues 698–718 (VYLIIAICAVSSLLVLTLLLY). Residues 719–947 (SALRCSTVPS…GNSTTDNSDQ (229 aa)) are Cytoplasmic-facing. 6 PXXP repeats span residues 734 to 737 (PPKP), 774 to 777 (PSLS), 796 to 799 (PRQP), 829 to 832 (PGGP), 870 to 873 (PGNP), and 888 to 891 (PGSP). The segment at 734–891 (PPKPVMVCSS…PDKFIIPGSP (158 aa)) is 6 X 4 AA repeats of P-X-X-P. The interval 738-947 (VMVCSSAVGS…GNSTTDNSDQ (210 aa)) is required for interaction with FYN. Disordered regions lie at residues 761–805 (GEYP…DWRY) and 824–853 (ILRAGPGGPDQQWPTVSSATPEPEAGEVSP). Residues 897–947 (RQESANNQIDKSDFITFGKKEETKKKKKKKKGNKTQEKKEKGNSTTDNSDQ) form a disordered region. The segment covering 906–920 (DKSDFITFGKKEETK) has biased composition (basic and acidic residues).

Forms homodimers in trans (molecules expressed by two different cells). Forms promiscuous heterodimers in cis (at the plasma membrane of the same cell) with other protocadherins. Interacts with FYN. As to expression, detected in brain.

The protein resides in the cell membrane. Calcium-dependent cell-adhesion protein involved in cells self-recognition and non-self discrimination. Thereby, it is involved in the establishment and maintenance of specific neuronal connections in the brain. This Rattus norvegicus (Rat) protein is Protocadherin alpha-4.